The following is a 583-amino-acid chain: GTP diphosphokinase CRSH1, chloroplastic (583 aa).

Low complexity predominate over residues 1 to 13 (MATAATTSAAAIP). The tract at residues 1–68 (MATAATTSAA…SSSSSTPAEG (68 aa)) is disordered. The transit peptide at 1 to 69 (MATAATTSAA…SSSSTPAEGG (69 aa)) directs the protein to the chloroplast. The span at 19 to 39 (RRQHPHPRRPGLRPRRLHRLR) shows a compositional bias: basic residues. The segment covering 40-66 (LPAQAAAAAAASSPSTSSSSSSSSTPA) has biased composition (low complexity). The region spanning 119 to 219 (ALARALAIAA…LELALKLDMM (101 aa)) is the HD domain. EF-hand domains follow at residues 473-508 (GDSNCTNRAFCQLDKNGDGRISIEELTEVMEDLGAG) and 510-542 (KDAKELMHLLDANSDGSLSSDEFEAFQRQIELM). Ca(2+) is bound by residues Asp-486, Asn-488, Asp-490, Arg-492, Glu-497, Asp-520, Asn-522, Asp-524, Ser-526, and Glu-531.

This sequence belongs to the RelA/SpoT family. Expressed in roots and shoots.

The protein resides in the plastid. Its subcellular location is the chloroplast. It catalyses the reaction GTP + ATP = guanosine 3'-diphosphate 5'-triphosphate + AMP. Its activity is regulated as follows. Activated by calcium. Its function is as follows. Possesses calcium-dependent ppGpp (guanosine 3'-diphosphate 5'-diphosphate) synthetase activity in vitro and is able to functionally complement E.coli relA mutants. May be involved in a rapid plant ppGpp-mediated response to pathogens and other stresses. The chain is GTP diphosphokinase CRSH1, chloroplastic from Oryza sativa subsp. japonica (Rice).